The chain runs to 572 residues: DNA polymerase (572 aa).

The segment at 1 to 222 is 3'-5' exonuclease and strand displacement activities; the sequence is MPRKMFSCDF…LPMDKEIRRA (222 aa). The interaction with the primer terminal protein stretch occupies residues 56–66; sequence YFHNLKFDGAF. The Mg(2+) site is built by D142 and D166. The segment at 223 to 226 is DNA-binding; Involved in the formation of a stable complex between TP and phi29 DNA polymerase; the sequence is YRGG. The interval 227-572 is initiation, polymerization and pyrophosphorolytic activities; sequence FTWLNDKYKE…VLVDSVFTIK (346 aa). Mg(2+) contacts are provided by D246 and V247. Residues Y251, K368, and K380 each coordinate 5-methyl-UTP. 2 residues coordinate Mg(2+): D453 and D455. 5-methyl-UTP is bound at residue D455.

This sequence belongs to the DNA polymerase type-B family. Interacts with the primer terminal protein; this interaction allows the initiation of TP-primed DNA replication at both viral DNA ends. Interacts with DNA. Mg(2+) serves as cofactor.

It catalyses the reaction DNA(n) + a 2'-deoxyribonucleoside 5'-triphosphate = DNA(n+1) + diphosphate. In terms of biological role, polymerase responsible for protein-primed viral DNA replication by strand displacement with high processivity and fidelity. To start replication, the DNA polymerase forms a heterodimer with a free primer terminal protein (TP), recognizes the replication origins at both 5' ends of the linear chromosome, and initiates replication using as primer the OH-group of Ser-232 of the TP. This polymerase possesses three enzymatic activities: DNA synthesis (polymerase), primer terminal protein (TP) deoxynucleotidylation, which is the formation of a covalent linkage (phosphoester) between the hydroxyl group of a specific serine residue in TP and 5'-dAMP, a reaction directed by the second T at the 3' end, and 3' to 5' exonuclease activity. Exonuclease activity has a proofreading purpose. This is DNA polymerase (2) from Bacillus phage B103 (Bacteriophage B103).